A 160-amino-acid chain; its full sequence is FNEEGSLYILKGDRTIEFDGEFAADVLVEFLLDLIEDPVEIINSKLEVQAFERIEDHIKLIGFFKSEDSEYYKAFEEAAEHFQPYIKFFATFDKGVAKKLSLKMNEVDFYEPFMEEPIVIPDKPYTEEEIVEFVKEHQRPTLRRLRPEDMFETWEDNLNG.

The protein belongs to the calsequestrin family. Monomer, homodimer and homooligomer. Mostly monomeric in the absence of calcium. Forms higher oligomers in a calcium-dependent manner. Dimers associate to form tetramers, that then form linear homomer chains. Interacts with ASPH and TRDN. Phosphorylation in the C-terminus, probably by CK2, moderately increases calcium buffering capacity. Post-translationally, N-glycosylated.

It localises to the sarcoplasmic reticulum lumen. Calsequestrin is a high-capacity, moderate affinity, calcium-binding protein and thus acts as an internal calcium store in muscle. Calcium ions are bound by clusters of acidic residues at the protein surface, especially at the interface between subunits. Can bind around 60 Ca(2+) ions. Regulates the release of lumenal Ca(2+) via the calcium release channel RYR2; this plays an important role in triggering muscle contraction. Plays a role in excitation-contraction coupling in the heart and in regulating the rate of heart beats. The polypeptide is Calsequestrin-2 (CASQ2) (Sus scrofa (Pig)).